A 113-amino-acid polypeptide reads, in one-letter code: Nucleoid-associated protein Csac_1593 (113 aa).

The protein belongs to the YbaB/EbfC family. As to quaternary structure, homodimer.

Its subcellular location is the cytoplasm. It is found in the nucleoid. Binds to DNA and alters its conformation. May be involved in regulation of gene expression, nucleoid organization and DNA protection. This Caldicellulosiruptor saccharolyticus (strain ATCC 43494 / DSM 8903 / Tp8T 6331) protein is Nucleoid-associated protein Csac_1593.